The following is a 280-amino-acid chain: Inhibitor of growth protein 2 (280 aa).

Residues 48–120 adopt a coiled-coil conformation; sequence VLRELDNKYQ…VENRARQMEL (73 aa). The segment at 122–204 is disordered; it reads SQCFQDPAES…KQEREASPVE (83 aa). The span at 130 to 140 shows a compositional bias: basic and acidic residues; that stretch reads ESERASDKAKM. Basic residues predominate over residues 181-193; it reads KKSKSAKKKKRSK. A Glycyl lysine isopeptide (Lys-Gly) (interchain with G-Cter in SUMO1) cross-link involves residue lysine 195. The PHD-type zinc finger occupies 212 to 261; the sequence is PTYCLCNQVSYGEMIGCDNEQCPIEWFHFSCVSLTYKPKGKWYCPKCRGD. Residues cysteine 215, cysteine 217, cysteine 228, cysteine 233, histidine 239, cysteine 242, cysteine 255, and cysteine 258 each contribute to the Zn(2+) site. Residues 258 to 274 are compositionally biased toward basic and acidic residues; it reads CRGDNEKTMDKSTEKTK. A disordered region spans residues 258–280; sequence CRGDNEKTMDKSTEKTKKDRRSR. Positions 264–280 are PBR; that stretch reads KTMDKSTEKTKKDRRSR.

This sequence belongs to the ING family. As to quaternary structure, interacts with H3K4me3 and to a lesser extent with H3K4me2. Component of a mSin3A-like complex at least consisting of SIN3A, HDAC1, HDAC2, RBBP4/RbAp48, RBBP7/RbAp46, SAP30 and ING2. Post-translationally, sumoylation enhances its association with SIN3A and is required for binding to some target gene promoters, this is the case for TMEM71. Widely expressed. Higher expressed in colon-cancer tumor than in normal colon tissues.

It localises to the nucleus. Functionally, seems to be involved in p53/TP53 activation and p53/TP53-dependent apoptotic pathways, probably by enhancing acetylation of p53/TP53. Component of a mSin3A-like corepressor complex, which is probably involved in deacetylation of nucleosomal histones. ING2 activity seems to be modulated by binding to phosphoinositides (PtdInsPs). In Homo sapiens (Human), this protein is Inhibitor of growth protein 2 (ING2).